A 423-amino-acid polypeptide reads, in one-letter code: GTPase Obg (423 aa).

The region spanning 1–158 is the Obg domain; sequence MFYDEAKIYV…RWLVLELKLL (158 aa). Residues 159–328 enclose the OBG-type G domain; the sequence is ADVGLIGLPN…LLYHVSGLLA (170 aa). GTP-binding positions include 165–172, 190–194, 212–215, 281–284, and 309–311; these read GLPNAGKS, FTTLT, DIPG, NKMD, and SAA. Mg(2+) contacts are provided by serine 172 and threonine 192. Positions 336–421 constitute an OCT domain; it reads VTAPEEEKVT…IGKFEFEYVE (86 aa).

It belongs to the TRAFAC class OBG-HflX-like GTPase superfamily. OBG GTPase family. As to quaternary structure, monomer. Mg(2+) serves as cofactor.

Its subcellular location is the cytoplasm. Functionally, an essential GTPase which binds GTP, GDP and possibly (p)ppGpp with moderate affinity, with high nucleotide exchange rates and a fairly low GTP hydrolysis rate. Plays a role in control of the cell cycle, stress response, ribosome biogenesis and in those bacteria that undergo differentiation, in morphogenesis control. The protein is GTPase Obg of Moorella thermoacetica (strain ATCC 39073 / JCM 9320).